Reading from the N-terminus, the 192-residue chain is Xanthine phosphoribosyltransferase 2 (192 aa).

The xanthine site is built by L20 and N27. Residue 131–135 (ANACA) participates in 5-phospho-alpha-D-ribose 1-diphosphate binding. K159 lines the xanthine pocket.

This sequence belongs to the purine/pyrimidine phosphoribosyltransferase family. Xpt subfamily. In terms of assembly, homodimer.

Its subcellular location is the cytoplasm. The catalysed reaction is XMP + diphosphate = xanthine + 5-phospho-alpha-D-ribose 1-diphosphate. It functions in the pathway purine metabolism; XMP biosynthesis via salvage pathway; XMP from xanthine: step 1/1. In terms of biological role, converts the preformed base xanthine, a product of nucleic acid breakdown, to xanthosine 5'-monophosphate (XMP), so it can be reused for RNA or DNA synthesis. The polypeptide is Xanthine phosphoribosyltransferase 2 (Clostridium perfringens (strain ATCC 13124 / DSM 756 / JCM 1290 / NCIMB 6125 / NCTC 8237 / Type A)).